Here is a 167-residue protein sequence, read N- to C-terminus: Claudin domain-containing protein 2 (167 aa).

The next 4 membrane-spanning stretches (helical) occupy residues 13–32, 61–81, 96–116, and 130–150; these read LLNL…NYWT, VSAA…GIGI, TIVL…VYTS, and YFFG…FLLA.

The protein belongs to the PMP-22/EMP/MP20 family.

It is found in the membrane. This chain is Claudin domain-containing protein 2 (Cldnd2), found in Mus musculus (Mouse).